The chain runs to 249 residues: 2,3-bisphosphoglycerate-dependent phosphoglycerate mutase (249 aa).

Substrate-binding positions include 9-16 (RHGQSQWN), 22-23 (TG), R61, 88-91 (ERHY), K99, 115-116 (RR), and 184-185 (GN). Residue H10 is the Tele-phosphohistidine intermediate of the active site. The active-site Proton donor/acceptor is E88.

It belongs to the phosphoglycerate mutase family. BPG-dependent PGAM subfamily. As to quaternary structure, homodimer.

It carries out the reaction (2R)-2-phosphoglycerate = (2R)-3-phosphoglycerate. Its pathway is carbohydrate degradation; glycolysis; pyruvate from D-glyceraldehyde 3-phosphate: step 3/5. Functionally, catalyzes the interconversion of 2-phosphoglycerate and 3-phosphoglycerate. The chain is 2,3-bisphosphoglycerate-dependent phosphoglycerate mutase from Xanthomonas campestris pv. campestris (strain 8004).